The primary structure comprises 500 residues: Centrosomal protein of 57 kDa (500 aa).

Low complexity predominate over residues 1 to 17; the sequence is MAAASVSAASGSHLSNS. 2 disordered regions span residues 1-34 and 43-62; these read MAAA…HSSS and KPFL…LAYP. The segment covering 18 to 34 has biased composition (polar residues); it reads FAEPSRSNGSMVRHSSS. Phosphoserine occurs at positions 53 and 55. Residues 58–239 are centrosome localization domain (CLD); it reads TLAYPESNSR…KAAELQTGLE (182 aa). Coiled coils occupy residues 63-242 and 392-492; these read ESNS…ETNR and ELKD…NSLQ. Residues 277–491 form a mediates interaction with microtubules region; the sequence is GAQPHYRLCL…KDMQSIQNSL (215 aa). The span at 434-450 shows a compositional bias: basic and acidic residues; the sequence is KKELKATKKTLDEERNS. The tract at residues 434–472 is disordered; sequence KKELKATKKTLDEERNSSSRSGITGTTNKKDFMKLRPGE. Polar residues predominate over residues 451 to 460; it reads SSRSGITGTT. Residues 461-471 show a composition bias toward basic and acidic residues; the sequence is NKKDFMKLRPG.

The protein belongs to the translokin family. As to quaternary structure, homodimer and homooligomer. Interacts with microtubules. Interacts with FGF2 and RAP80. Does not interact with FGF1 or FGF2 isoform 24 kDa. In terms of tissue distribution, ubiquitous.

It is found in the nucleus. The protein localises to the cytoplasm. The protein resides in the cytoskeleton. Its subcellular location is the microtubule organizing center. It localises to the centrosome. Centrosomal protein which may be required for microtubule attachment to centrosomes. May act by forming ring-like structures around microtubules. Mediates nuclear translocation and mitogenic activity of the internalized growth factor FGF2, but that of FGF1. This is Centrosomal protein of 57 kDa (CEP57) from Homo sapiens (Human).